A 318-amino-acid polypeptide reads, in one-letter code: DNA primase small subunit PriS (318 aa).

Residues Asp-95, Asp-97, and Asp-224 contribute to the active site.

It belongs to the eukaryotic-type primase small subunit family. As to quaternary structure, heterodimer of a small subunit (PriS) and a large subunit (PriL). The cofactor is Mg(2+). Requires Mn(2+) as cofactor.

Functionally, catalytic subunit of DNA primase, an RNA polymerase that catalyzes the synthesis of short RNA molecules used as primers for DNA polymerase during DNA replication. The small subunit contains the primase catalytic core and has DNA synthesis activity on its own. Binding to the large subunit stabilizes and modulates the activity, increasing the rate of DNA synthesis while decreasing the length of the DNA fragments, and conferring RNA synthesis capability. The DNA polymerase activity may enable DNA primase to also catalyze primer extension after primer synthesis. May also play a role in DNA repair. This chain is DNA primase small subunit PriS, found in Sulfurisphaera tokodaii (strain DSM 16993 / JCM 10545 / NBRC 100140 / 7) (Sulfolobus tokodaii).